A 596-amino-acid polypeptide reads, in one-letter code: Actin-histidine N-methyltransferase (596 aa).

A disordered region spans residues 1–22 (MGKKSRVKTQKSGTGATATVSP). The span at 10–20 (QKSGTGATATV) shows a compositional bias: polar residues. S-adenosyl-L-methionine contacts are provided by residues Arg75, 104–106 (EGF), Arg254, 275–279 (DMCNH), and 325–327 (SGF). An SET domain is found at 94–314 (EGFEMVNFKE…AGDQIYIFYG (221 aa)). Positions 551–596 (GLVNGESLIPNGTRSENESLSPEESENTTGDTEESSGSMDAVKERL) are disordered. The span at 571-584 (SPEESENTTGDTEE) shows a compositional bias: acidic residues.

The protein belongs to the class V-like SAM-binding methyltransferase superfamily. SETD3 actin-histidine methyltransferase family. In terms of assembly, interacts with MYOD1. In terms of processing, phosphorylated by GSK3B, which is required for recognition by the SCF(FBXW7) complex and subsequent degradation. Ubiquitinated by the SCF(FBXW7) complex following phosphorylation by GSK3B, leading to its degradation by the proteasome.

The protein resides in the cytoplasm. The protein localises to the nucleus. It carries out the reaction L-histidyl-[protein] + S-adenosyl-L-methionine = N(tele)-methyl-L-histidyl-[protein] + S-adenosyl-L-homocysteine + H(+). Its function is as follows. Protein-histidine N-methyltransferase that specifically mediates 3-methylhistidine (tele-methylhistidine) methylation of actin at 'His-73'. Histidine methylation of actin is required for smooth muscle contraction of the laboring uterus during delivery. Does not have protein-lysine N-methyltransferase activity and probably only catalyzes histidine methylation of actin. The polypeptide is Actin-histidine N-methyltransferase (Rattus norvegicus (Rat)).